Here is a 332-residue protein sequence, read N- to C-terminus: Anthranilate phosphoribosyltransferase (332 aa).

Residues glycine 79, 82 to 83 (GD), serine 87, 89 to 92 (NIST), 107 to 115 (KHGNRSVSS), and serine 119 contribute to the 5-phospho-alpha-D-ribose 1-diphosphate site. Position 79 (glycine 79) interacts with anthranilate. Mg(2+) is bound at residue serine 91. An anthranilate-binding site is contributed by asparagine 110. Arginine 165 contacts anthranilate. Mg(2+) is bound by residues aspartate 223 and glutamate 224.

It belongs to the anthranilate phosphoribosyltransferase family. As to quaternary structure, homodimer. Mg(2+) is required as a cofactor.

It catalyses the reaction N-(5-phospho-beta-D-ribosyl)anthranilate + diphosphate = 5-phospho-alpha-D-ribose 1-diphosphate + anthranilate. The protein operates within amino-acid biosynthesis; L-tryptophan biosynthesis; L-tryptophan from chorismate: step 2/5. Catalyzes the transfer of the phosphoribosyl group of 5-phosphorylribose-1-pyrophosphate (PRPP) to anthranilate to yield N-(5'-phosphoribosyl)-anthranilate (PRA). This Serratia proteamaculans (strain 568) protein is Anthranilate phosphoribosyltransferase.